We begin with the raw amino-acid sequence, 190 residues long: NADH-dependent phenylglyoxylate dehydrogenase subunit gamma (190 aa).

As to quaternary structure, dimer of heteropentamers composed of an alpha (PadG), a beta (PadI), a gamma (PadE), a delta (PadF) and an epsilon (PadH) subunit.

It catalyses the reaction phenylglyoxylate + NAD(+) + CoA = benzoyl-CoA + CO2 + NADH. Activated by magnesium ions and thiamine diphosphate. Involved in the anaerobic metabolism of phenylalanine and phenylacetate. Catalyzes the oxidative decarboxylation of phenylglyoxylate to benzoyl-CoA and CO(2). It can also react slowly with 2-oxo-3-methylbutanoate and use different electron acceptors such as benzyl viologen, methyl viologen, FAD or FMN, but NAD seems to be the physiological electron acceptor. Also catalyzes an isotope exchange between CO(2) and the carboxyl group which proves partial or complete reversibility of the oxidative decarboxylation reaction. This chain is NADH-dependent phenylglyoxylate dehydrogenase subunit gamma (padE), found in Aromatoleum evansii (Azoarcus evansii).